We begin with the raw amino-acid sequence, 349 residues long: UPF0324 inner membrane protein YeiH (349 aa).

The Periplasmic segment spans residues 1-12; sequence MTELTLQNHCRT. The helical transmembrane segment at 13–35 threads the bilayer; it reads MWHFIPGLALSAVITGVALWGGA. The Cytoplasmic segment spans residues 36 to 38; that stretch reads IPA. A helical membrane pass occupies residues 39 to 61; the sequence is VAGAGFSALTLAILLGMVIGNTI. At 62–99 the chain is on the periplasmic side; it reads YPQIWKQCDGGVLFAKQHLLRLGIILYGFRLTFSQIAD. The chain crosses the membrane as a helical span at residues 100–122; it reads VGISGIVIDVLTLSSTFMLACFL. The Cytoplasmic segment spans residues 123-131; sequence GQKVFGLDR. A helical transmembrane segment spans residues 132 to 151; the sequence is HTSWLIGAGSSICGAAAVLA. Topologically, residues 152 to 162 are periplasmic; the sequence is TEPVVKAEASK. The helical transmembrane segment at 163-185 threads the bilayer; sequence VTVAVATVVIFGTIAIFLYPAMY. Residues 186-261 are Cytoplasmic-facing; it reads PLLAHWFSPE…SPATGAEKSK (76 aa). Residues 262–284 form a helical membrane-spanning segment; that stretch reads ITIPWFAIFFIVVAIFNSFHLLP. Topologically, residues 285 to 290 are periplasmic; the sequence is KAVVDM. A helical transmembrane segment spans residues 291–313; the sequence is LVTLDTVLLAMAMAALGLTTHVS. Topologically, residues 314–322 are cytoplasmic; it reads ALKKAGAKP. The chain crosses the membrane as a helical span at residues 323–345; sequence LLMALALFAWLIIGGGAINVLIH. The Periplasmic portion of the chain corresponds to 346–349; the sequence is SLIA.

This sequence belongs to the UPF0324 family.

The protein resides in the cell inner membrane. The polypeptide is UPF0324 inner membrane protein YeiH (yeiH) (Salmonella typhimurium (strain LT2 / SGSC1412 / ATCC 700720)).